Here is a 372-residue protein sequence, read N- to C-terminus: Mitogen-activated protein kinase homolog NTF3 (372 aa).

Residues 32 to 319 (YVPIKPIGRG…VIEALQHPYM (288 aa)) form the Protein kinase domain. Residues 38 to 46 (IGRGAYGIV) and Lys-61 contribute to the ATP site. The Proton acceptor role is filled by Asp-158. Phosphothreonine is present on Thr-191. The TXY motif lies at 191–193 (TEY). Tyr-193 is modified (phosphotyrosine).

It belongs to the protein kinase superfamily. CMGC Ser/Thr protein kinase family. MAP kinase subfamily. Mg(2+) is required as a cofactor. In terms of processing, dually phosphorylated on Thr-191 and Tyr-193, which activates the enzyme. Very low autophosphorylation, although dramatically increased when Mn(2+) is added to the reaction instead of Mg(2+). Ubiquitous.

It catalyses the reaction L-seryl-[protein] + ATP = O-phospho-L-seryl-[protein] + ADP + H(+). The catalysed reaction is L-threonyl-[protein] + ATP = O-phospho-L-threonyl-[protein] + ADP + H(+). Activated by tyrosine and threonine phosphorylation. This is Mitogen-activated protein kinase homolog NTF3 (NTF3) from Nicotiana tabacum (Common tobacco).